The chain runs to 215 residues: Cytochrome b6 (215 aa).

A helical transmembrane segment spans residues 32-52; the sequence is IFYCFGGIVFTCFLVQVATGF. Cys35 provides a ligand contact to heme c. Heme b contacts are provided by His86 and His100. 3 helical membrane passes run 90–110, 116–136, and 186–206; these read ASMMVMMLVLHVFRVYLTGGF, LTWVTGVILAVVTVSFGVTGY, and AHTFVLPLAAAVLMLTHFLMI. Heme b-binding residues include His187 and His202.

Belongs to the cytochrome b family. PetB subfamily. In terms of assembly, the 4 large subunits of the cytochrome b6-f complex are cytochrome b6, subunit IV (17 kDa polypeptide, PetD), cytochrome f and the Rieske protein, while the 4 small subunits are PetG, PetL, PetM and PetN. The complex functions as a dimer. The cofactor is heme b. Heme c serves as cofactor.

It is found in the plastid. The protein resides in the chloroplast thylakoid membrane. Component of the cytochrome b6-f complex, which mediates electron transfer between photosystem II (PSII) and photosystem I (PSI), cyclic electron flow around PSI, and state transitions. The protein is Cytochrome b6 of Skeletonema costatum (Marine centric diatom).